The following is a 75-amino-acid chain: Putative snRNP Sm-like protein (75 aa).

One can recognise a Sm domain in the interval 4–75 (RPLDVIHRSL…NVLAISPTEE (72 aa)).

It belongs to the snRNP Sm proteins family.

The chain is Putative snRNP Sm-like protein from Pyrococcus abyssi (strain GE5 / Orsay).